Consider the following 154-residue polypeptide: Transcriptional repressor NrdR (154 aa).

A zinc finger spans residues 3–34 (CPFCGNENTRVIDTRAAEDGFAIKRRRECENC). The ATP-cone domain maps to 49–139 (LIVVKKDGSK…VYRQFKDVNS (91 aa)).

The protein belongs to the NrdR family. Zn(2+) serves as cofactor.

Its function is as follows. Negatively regulates transcription of bacterial ribonucleotide reductase nrd genes and operons by binding to NrdR-boxes. The sequence is that of Transcriptional repressor NrdR from Carboxydothermus hydrogenoformans (strain ATCC BAA-161 / DSM 6008 / Z-2901).